The sequence spans 234 residues: Nuclear transcription factor Y subunit C-1 (234 aa).

Disordered regions lie at residues 1–20 (MDTNNQQPPPSAAGIPPPPP) and 205–234 (SVWQTSTGTGDDVSYGSGGSSGQGNLDGQG). Pro residues predominate over residues 7 to 20 (QPPPSAAGIPPPPP). Low complexity predominate over residues 209-219 (TSTGTGDDVSY). Over residues 220-234 (GSGGSSGQGNLDGQG) the composition is skewed to gly residues.

This sequence belongs to the NFYC/HAP5 subunit family. In terms of assembly, heterotrimeric transcription factor composed of three components, NF-YA, NF-YB and NF-YC. NF-YB and NF-YC must interact and dimerize for NF-YA association and DNA binding. As to expression, ubiquitous. Present in etiolated seedlings.

Its subcellular location is the nucleus. Functionally, stimulates the transcription of various genes by recognizing and binding to a CCAAT motif in promoters. This Arabidopsis thaliana (Mouse-ear cress) protein is Nuclear transcription factor Y subunit C-1 (NFYC1).